The following is a 249-amino-acid chain: DNA polymerase sliding clamp (249 aa).

This sequence belongs to the PCNA family. As to quaternary structure, homotrimer. The subunits circularize to form a toroid; DNA passes through its center. Replication factor C (RFC) is required to load the toroid on the DNA.

Sliding clamp subunit that acts as a moving platform for DNA processing. Responsible for tethering the catalytic subunit of DNA polymerase and other proteins to DNA during high-speed replication. The protein is DNA polymerase sliding clamp of Methanococcus vannielii (strain ATCC 35089 / DSM 1224 / JCM 13029 / OCM 148 / SB).